Here is a 792-residue protein sequence, read N- to C-terminus: Ribonucleoside-diphosphate reductase large subunit (792 aa).

The ATP-cone domain occupies 1-92 (MHVIKRDGRQ…VSNLHKEAKK (92 aa)). Residues 5-6 (KR), 11-17 (ERVMFDK), Thr53, and Asp57 each bind ATP. Position 17 is an N6-acetyllysine (Lys17). Residues Ser202 and Ser217 each contribute to the GDP site. Cys218 and Cys444 form a disulfide bridge. Residues 226-228 (DSI), Lys243, Arg256, and 263-264 (AG) each bind dTTP. Lys376 bears the N6-acetyllysine mark. Catalysis depends on Ser427, which acts as the Proton acceptor. Catalysis depends on Cys429, which acts as the Cysteine radical intermediate. GDP-binding positions include Glu431 and 604-607 (TAST). The Proton acceptor role is filled by Glu431. Position 751 is a phosphothreonine (Thr751).

Belongs to the ribonucleoside diphosphate reductase large chain family. As to quaternary structure, heterodimer of a large and a small subunit. Interacts with RRM2B. Interacts with AHCYL1 which inhibits its activity.

It localises to the cytoplasm. The catalysed reaction is a 2'-deoxyribonucleoside 5'-diphosphate + [thioredoxin]-disulfide + H2O = a ribonucleoside 5'-diphosphate + [thioredoxin]-dithiol. Its activity is regulated as follows. Under complex allosteric control mediated by deoxynucleoside triphosphates and ATP binding to separate specificity and activation sites on the M1 subunit. The type of nucleotide bound at the specificity site determines substrate preference. It seems probable that ATP makes the enzyme reduce CDP and UDP, dGTP favors ADP reduction and dTTP favors GDP reduction. Stimulated by ATP and inhibited by dATP binding to the activity site, the dATP inhibition is mediated by AHCYL1 which stabilizes dATP in the site. Provides the precursors necessary for DNA synthesis. Catalyzes the biosynthesis of deoxyribonucleotides from the corresponding ribonucleotides. The polypeptide is Ribonucleoside-diphosphate reductase large subunit (RRM1) (Pongo abelii (Sumatran orangutan)).